Consider the following 677-residue polypeptide: Fidgetin-like protein 1 (677 aa).

The segment covering 203–216 (TSSAPSGESTTATF) has biased composition (polar residues). Disordered regions lie at residues 203–232 (TSSAPSGESTTATFHRTPLFGNTKKEPQSF), 249–324 (VPSG…SFNG), and 337–378 (GIFG…TDDR). Residue Lys226 forms a Glycyl lysine isopeptide (Lys-Gly) (interchain with G-Cter in SUMO2) linkage. Residues 264-280 (DSDTINMLSNPTLNKAP) show a composition bias toward polar residues. Over residues 281–292 (SKTEDSGQREDN) the composition is skewed to basic and acidic residues. At Lys341 the chain carries N6-acetyllysine. Polar residues predominate over residues 347–358 (SNKQDGSEQNGN). Residues Ala407 and 447–452 (GTGKTL) contribute to the ATP site.

Belongs to the AAA ATPase family. Hexamer. Interacts (via N-terminal one-half region) with RAD51; the interaction is direct. Interacts (via N-terminal one-half region) with SPIDR (via the C-terminal region); the interaction is direct. Interacts with FIRRM; may regulate homologous recombination. Requires Mg(2+) as cofactor.

It localises to the nucleus. It is found in the cytoplasm. Its subcellular location is the perinuclear region. The catalysed reaction is ATP + H2O = ADP + phosphate + H(+). Its function is as follows. Involved in DNA double-strand break (DBS) repair via homologous recombination (HR). Recruited at DSB sites independently of BRCA2, RAD51 and RAD51 paralogs in a H2AX-dependent manner. May regulate osteoblast proliferation and differentiation. May play a role in the control of male meiosis dynamic. This Rattus norvegicus (Rat) protein is Fidgetin-like protein 1 (Fignl1).